The primary structure comprises 333 residues: Ketol-acid reductoisomerase (NADP(+)) (333 aa).

The KARI N-terminal Rossmann domain maps to 1-179; sequence MFYDDDADLT…GGTRAGVIKT (179 aa). NADP(+) contacts are provided by residues 22–25, K45, S48, S50, and 80–83; these read YGSQ and DTAQ. H105 is an active-site residue. G131 provides a ligand contact to NADP(+). The KARI C-terminal knotted domain occupies 180–325; it reads TFKDETETDL…KRLRDLMSWV (146 aa). Mg(2+) contacts are provided by D188, E192, E224, and E228. S249 provides a ligand contact to substrate.

The protein belongs to the ketol-acid reductoisomerase family. Mg(2+) is required as a cofactor.

It carries out the reaction (2R)-2,3-dihydroxy-3-methylbutanoate + NADP(+) = (2S)-2-acetolactate + NADPH + H(+). The enzyme catalyses (2R,3R)-2,3-dihydroxy-3-methylpentanoate + NADP(+) = (S)-2-ethyl-2-hydroxy-3-oxobutanoate + NADPH + H(+). It functions in the pathway amino-acid biosynthesis; L-isoleucine biosynthesis; L-isoleucine from 2-oxobutanoate: step 2/4. It participates in amino-acid biosynthesis; L-valine biosynthesis; L-valine from pyruvate: step 2/4. In terms of biological role, involved in the biosynthesis of branched-chain amino acids (BCAA). Catalyzes an alkyl-migration followed by a ketol-acid reduction of (S)-2-acetolactate (S2AL) to yield (R)-2,3-dihydroxy-isovalerate. In the isomerase reaction, S2AL is rearranged via a Mg-dependent methyl migration to produce 3-hydroxy-3-methyl-2-ketobutyrate (HMKB). In the reductase reaction, this 2-ketoacid undergoes a metal-dependent reduction by NADPH to yield (R)-2,3-dihydroxy-isovalerate. This chain is Ketol-acid reductoisomerase (NADP(+)), found in Mycobacterium avium (strain 104).